Consider the following 115-residue polypeptide: uncharacterized protein (115 aa).

It to M.tuberculosis Rv3073c.

This is an uncharacterized protein from Escherichia coli (strain K12).